The chain runs to 349 residues: uncharacterized protein (349 aa).

The region spanning 51–160 (NIIKENKNNL…QDESYISIFQ (110 aa)) is the THUMP domain.

This is an uncharacterized protein from Methanocaldococcus jannaschii (strain ATCC 43067 / DSM 2661 / JAL-1 / JCM 10045 / NBRC 100440) (Methanococcus jannaschii).